A 296-amino-acid polypeptide reads, in one-letter code: 4-diphosphocytidyl-2-C-methyl-D-erythritol kinase (296 aa).

Lys14 is an active-site residue. 97 to 107 is a binding site for ATP; the sequence is PMGAGMGGGSS. Residue Asp139 is part of the active site.

The protein belongs to the GHMP kinase family. IspE subfamily.

The catalysed reaction is 4-CDP-2-C-methyl-D-erythritol + ATP = 4-CDP-2-C-methyl-D-erythritol 2-phosphate + ADP + H(+). It functions in the pathway isoprenoid biosynthesis; isopentenyl diphosphate biosynthesis via DXP pathway; isopentenyl diphosphate from 1-deoxy-D-xylulose 5-phosphate: step 3/6. Functionally, catalyzes the phosphorylation of the position 2 hydroxy group of 4-diphosphocytidyl-2C-methyl-D-erythritol. The chain is 4-diphosphocytidyl-2-C-methyl-D-erythritol kinase from Polynucleobacter necessarius subsp. necessarius (strain STIR1).